Here is a 378-residue protein sequence, read N- to C-terminus: Chaperone protein DnaJ (378 aa).

The 65-residue stretch at aspartate 3 to glycine 67 folds into the J domain. The CR-type zinc-finger motif lies at glycine 133 to arginine 215. Zn(2+)-binding residues include cysteine 146, cysteine 149, cysteine 163, cysteine 166, cysteine 189, cysteine 192, cysteine 203, and cysteine 206. 4 CXXCXGXG motif repeats span residues cysteine 146 to glycine 153, cysteine 163 to glycine 170, cysteine 189 to glycine 196, and cysteine 203 to glycine 210.

Belongs to the DnaJ family. In terms of assembly, homodimer. It depends on Zn(2+) as a cofactor.

The protein resides in the cytoplasm. Participates actively in the response to hyperosmotic and heat shock by preventing the aggregation of stress-denatured proteins and by disaggregating proteins, also in an autonomous, DnaK-independent fashion. Unfolded proteins bind initially to DnaJ; upon interaction with the DnaJ-bound protein, DnaK hydrolyzes its bound ATP, resulting in the formation of a stable complex. GrpE releases ADP from DnaK; ATP binding to DnaK triggers the release of the substrate protein, thus completing the reaction cycle. Several rounds of ATP-dependent interactions between DnaJ, DnaK and GrpE are required for fully efficient folding. Also involved, together with DnaK and GrpE, in the DNA replication of plasmids through activation of initiation proteins. The sequence is that of Chaperone protein DnaJ from Prochlorococcus marinus (strain MIT 9313).